Reading from the N-terminus, the 215-residue chain is 3-demethoxyubiquinol 3-hydroxylase (215 aa).

6 residues coordinate Fe cation: glutamate 64, glutamate 94, histidine 97, glutamate 146, glutamate 178, and histidine 181.

The protein belongs to the COQ7 family. Fe cation is required as a cofactor.

The protein resides in the cell membrane. It catalyses the reaction a 5-methoxy-2-methyl-3-(all-trans-polyprenyl)benzene-1,4-diol + AH2 + O2 = a 3-demethylubiquinol + A + H2O. It participates in cofactor biosynthesis; ubiquinone biosynthesis. Functionally, catalyzes the hydroxylation of 2-nonaprenyl-3-methyl-6-methoxy-1,4-benzoquinol during ubiquinone biosynthesis. The polypeptide is 3-demethoxyubiquinol 3-hydroxylase (Pseudomonas putida (strain GB-1)).